A 311-amino-acid polypeptide reads, in one-letter code: Formimidoylglutamase (311 aa).

His122, Asp151, His153, Asp155, Cys242, and Asp244 together coordinate Mn(2+).

This sequence belongs to the arginase family. As to quaternary structure, homodimer. Mn(2+) is required as a cofactor.

The enzyme catalyses N-formimidoyl-L-glutamate + H2O = formamide + L-glutamate. The protein operates within amino-acid degradation; L-histidine degradation into L-glutamate; L-glutamate from N-formimidoyl-L-glutamate (hydrolase route): step 1/1. Functionally, catalyzes the conversion of N-formimidoyl-L-glutamate to L-glutamate and formamide. In Pseudomonas aeruginosa (strain ATCC 15692 / DSM 22644 / CIP 104116 / JCM 14847 / LMG 12228 / 1C / PRS 101 / PAO1), this protein is Formimidoylglutamase.